Reading from the N-terminus, the 475-residue chain is Vitronectin (475 aa).

The first 19 residues, 1-19 (MAPLRPIFTLALLLWVVLA), serve as a signal peptide directing secretion. The SMB domain occupies 20-63 (DQESCKDRCTEGFNANRKCQCDELCSYYQSCCADYAAECKPQVT). Cystine bridges form between Cys24–Cys28, Cys24–Cys40, Cys28–Cys58, Cys38–Cys40, Cys38–Cys51, Cys44–Cys50, and Cys51–Cys58. The short motif at 64-66 (RGD) is the Cell attachment site element. Phosphothreonine is present on Thr69. Sulfotyrosine is present on residues Tyr75, Tyr78, and Tyr80. A glycan (N-linked (GlcNAc...) asparagine) is linked at Asn87. Residues 87 to 123 (NASVHAQPESPTVGQEPTLSPDLQTEGGAEPTHEVPL) form a disordered region. Residues 95 to 109 (ESPTVGQEPTLSPDL) show a composition bias toward polar residues. 3 Hemopexin repeats span residues 158 to 202 (GKPF…VWGI), 203 to 250 (EGPI…FSGI), and 251 to 305 (PDNV…FEHF). Residues Asn169 and Asn242 are each glycosylated (N-linked (GlcNAc...) asparagine). Sulfotyrosine occurs at positions 279 and 282. Ser312 is modified (phosphoserine). Positions 359 to 391 (LTPSPSAKKQKSRRRSRKRYRSRYGRGRSQNSR) are disordered. Over residues 366–384 (KKQKSRRRSRKRYRSRYGR) the composition is skewed to basic residues. The segment at 366 to 392 (KKQKSRRRSRKRYRSRYGRGRSQNSRR) is glycosaminoglycan binding region. Phosphoserine is present on Ser394. One copy of the Hemopexin 4 repeat lies at 419–469 (TSWLKPATSEPIQSVYFFSGDKYYRVNLRTQRVDTVNPPYPRSIAQYWLGC).

Interacts with SERPINE1/PAI1 and C1QBP. Monomer. Sulfated on tyrosine residues. Post-translationally, N- and O-glycosylated. In terms of processing, it has been suggested that the active SMB domain may be permitted considerable disulfide bond heterogeneity or variability, thus two alternate disulfide patterns based on 3D structures are described with 1 disulfide bond conserved in both. As to expression, plasma.

The protein resides in the secreted. Its subcellular location is the extracellular space. Its function is as follows. Vitronectin is a cell adhesion and spreading factor found in serum and tissues. Vitronectin interact with glycosaminoglycans and proteoglycans. Is recognized by certain members of the integrin family and serves as a cell-to-substrate adhesion molecule. Inhibitor of the membrane-damaging effect of the terminal cytolytic complement pathway. The protein is Vitronectin (VTN) of Oryctolagus cuniculus (Rabbit).